Here is a 462-residue protein sequence, read N- to C-terminus: MKSSTREQTPVTSPTPHDPTPPTPPRGSTPLFSRGSWLETRRITDVLRKETIGGALLLLGTVVALVWANSPWSSSYAGLRDTVIAPSLLHPLHLDLTLGQWAADGLLAIFFFIAGLELKREFVAGDLRDPRRALVPVAAAVGGMAVPAVVYVLVARSAGDGALNGWAIPTATDIAFAVAVLAVISTHLPTALRTFLLTLAVVDDLLAITIIAIFYTDTLAVLPLLGALAVIAVFGLLVQKRIRSWWLLIPLAVVAWALMHASGIHATVAGVLLGFTVPVLRSRAAGGPEAGPGMAEHFEHVWRPLSAGFAVPVFAFFSAGVTVGGLSGLVDSLQDRVALGIVAGLVVGKAAGILGATAAVSRFTRARLDPSLSWWDVLGASLLGGIGFTVSLLIGELAFGAGSVRDEHVKVGVLTGSLLAAALAAVVLRARNRVYRRLHEAERVDEDADGVPDVYQAPRLNG.

The tract at residues 1 to 31 (MKSSTREQTPVTSPTPHDPTPPTPPRGSTPL) is disordered. Positions 16–27 (PHDPTPPTPPRG) are enriched in pro residues. 11 helical membrane-spanning segments follow: residues 52 to 72 (IGGALLLLGTVVALVWANSPW), 96 to 116 (LTLGQWAADGLLAIFFFIAGL), 134 to 154 (LVPVAAAVGGMAVPAVVYVLV), 165 to 185 (GWAIPTATDIAFAVAVLAVIS), 195 to 215 (FLLTLAVVDDLLAITIIAIFY), 218 to 238 (TLAVLPLLGALAVIAVFGLLV), 244 to 264 (SWWLLIPLAVVAWALMHASGI), 309 to 329 (FAVPVFAFFSAGVTVGGLSGL), 337 to 357 (VALGIVAGLVVGKAAGILGAT), 382 to 402 (LLGGIGFTVSLLIGELAFGAG), and 408 to 428 (HVKVGVLTGSLLAAALAAVVL).

This sequence belongs to the NhaA Na(+)/H(+) (TC 2.A.33) antiporter family.

It localises to the cell membrane. The enzyme catalyses Na(+)(in) + 2 H(+)(out) = Na(+)(out) + 2 H(+)(in). Functionally, na(+)/H(+) antiporter that extrudes sodium in exchange for external protons. In Kineococcus radiotolerans (strain ATCC BAA-149 / DSM 14245 / SRS30216), this protein is Na(+)/H(+) antiporter NhaA 2.